The primary structure comprises 349 residues: Heat-inducible transcription repressor HrcA (349 aa).

It belongs to the HrcA family.

In terms of biological role, negative regulator of class I heat shock genes (grpE-dnaK-dnaJ and groELS operons). Prevents heat-shock induction of these operons. The polypeptide is Heat-inducible transcription repressor HrcA (Xylella fastidiosa (strain 9a5c)).